Reading from the N-terminus, the 199-residue chain is Thymidine kinase (199 aa).

ATP is bound by residues 15–22 and 88–91; these read GSMFSGKS and DEVQ. The Proton acceptor role is filled by glutamate 89. Positions 145, 148, 183, and 186 each coordinate Zn(2+).

The protein belongs to the thymidine kinase family. In terms of assembly, homotetramer.

The protein resides in the cytoplasm. The catalysed reaction is thymidine + ATP = dTMP + ADP + H(+). The polypeptide is Thymidine kinase (Staphylococcus aureus (strain Mu50 / ATCC 700699)).